Consider the following 517-residue polypeptide: Serine hydroxymethyltransferase 2, mitochondrial (517 aa).

Residues 1–29 (MALALRRLSSSVKKPISLLSSNGGSLRFM) constitute a mitochondrion transit peptide. S82 is an L-serine binding site. Pemetrexed-binding positions include S82, Y102, E104, Y112, 148 to 150 (SGS), and H177. Residues E104 and Y112 each coordinate L-serine. Residue E104 coordinates methotrexate. 184 to 186 (TDT) is a methotrexate binding site. Pemetrexed is bound by residues S232 and H260. Residues H260 and K286 each contribute to the L-serine site. N6-(pyridoxal phosphate)lysine is present on K286. Pemetrexed is bound at residue G331. K414 contributes to the methotrexate binding site. R430 lines the L-serine pocket. Residue R430 participates in pemetrexed binding.

The protein belongs to the SHMT family. Homotetramer. Pyridoxal 5'-phosphate serves as cofactor. In terms of tissue distribution, ubiquitous. Mainly expressed in the shoot apical meristem and roots. Also detected in the leaf vasculature, especially in the protoxylem and adjacent cell layers.

It is found in the mitochondrion. It catalyses the reaction (6R)-5,10-methylene-5,6,7,8-tetrahydrofolate + glycine + H2O = (6S)-5,6,7,8-tetrahydrofolate + L-serine. The protein operates within one-carbon metabolism; tetrahydrofolate interconversion. With respect to regulation, inhibited by the antifolate drugs methotrexate and pemetrexed. Functions outside the photorespiratory pathway in catalyzing the interconversion of serine and glycine with the conversion of tetrahydrofolate (THF) into 5,10-methylene-THF. The chain is Serine hydroxymethyltransferase 2, mitochondrial from Arabidopsis thaliana (Mouse-ear cress).